The following is a 466-amino-acid chain: Rho GTPase-activating protein 1 (466 aa).

Disordered regions lie at residues 1–31 (MTEV…SLSY) and 65–84 (EEQD…DDGG). The segment covering 8–31 (PSSPSASHSSSSSSSSPSPSSLSY) has biased composition (low complexity). Basic and acidic residues predominate over residues 65–74 (EEQDLRRRSS). A CRIB domain is found at 117 to 130 (IGWPTNVRHVAHVT). Positions 162–342 (VSTESMQLSY…TLIEKTLRER (181 aa)) constitute a Rho-GAP domain. The segment at 354–402 (PLEPSDESGHQSPSQSLAFNTSEQSEETQSDNIENAENQSSSSEISDEL) is disordered. Composition is skewed to polar residues over residues 363–376 (HQSP…NTSE) and 383–397 (SDNI…SSSE).

Acts as a GTPase activator for the Rac-type GTPase by converting it to an inactive GDP-bound state. In Arabidopsis thaliana (Mouse-ear cress), this protein is Rho GTPase-activating protein 1 (ROPGAP1).